A 95-amino-acid polypeptide reads, in one-letter code: Ferredoxin-4 (95 aa).

Positions 2 to 95 (DKATLTFTDV…LGGAVKVRPA (94 aa)) constitute a 2Fe-2S ferredoxin-type domain. [2Fe-2S] cluster-binding residues include Cys-38, Cys-43, Cys-46, and Cys-81.

The protein belongs to the 2Fe2S plant-type ferredoxin family. [2Fe-2S] cluster serves as cofactor.

Its function is as follows. Ferredoxins are iron-sulfur proteins that transfer electrons in a wide variety of metabolic reactions. This ferredoxin is required for nitrogen fixation. The sequence is that of Ferredoxin-4 (fdxC) from Rhodobacter capsulatus (Rhodopseudomonas capsulata).